A 131-amino-acid chain; its full sequence is Photosystem II extrinsic protein U (131 aa).

The signal sequence occupies residues methionine 1 to alanine 28. Residues leucine 29–alanine 36 constitute a propeptide that is removed on maturation.

The protein belongs to the PsbU family. PSII is composed of 1 copy each of membrane proteins PsbA, PsbB, PsbC, PsbD, PsbE, PsbF, PsbH, PsbI, PsbJ, PsbK, PsbL, PsbM, PsbT, PsbX, PsbY, PsbZ, Psb30/Ycf12, peripheral proteins PsbO, CyanoQ (PsbQ), PsbU, PsbV and a large number of cofactors. It forms dimeric complexes.

The protein resides in the cellular thylakoid membrane. Functionally, one of the extrinsic, lumenal subunits of photosystem II (PSII). PSII is a light-driven water plastoquinone oxidoreductase, using light energy to abstract electrons from H(2)O, generating a proton gradient subsequently used for ATP formation. The extrinsic proteins stabilize the structure of photosystem II oxygen-evolving complex (OEC), the ion environment of oxygen evolution and protect the OEC against heat-induced inactivation. May modulate the Cl(-) requirement for oxygen evolution. This chain is Photosystem II extrinsic protein U, found in Synechocystis sp. (strain ATCC 27184 / PCC 6803 / Kazusa).